A 49-amino-acid polypeptide reads, in one-letter code: MRELVKLVCTECGDENYHTTKNKKTTPDRLEMSKYCPRTRKYTLHREKK.

This sequence belongs to the bacterial ribosomal protein bL33 family.

The chain is Large ribosomal subunit protein bL33B from Acholeplasma laidlawii (strain PG-8A).